The sequence spans 300 residues: 3-hydroxy-3-isohexenylglutaryl-CoA/hydroxy-methylglutaryl-CoA lyase (300 aa).

One can recognise a Pyruvate carboxyltransferase domain in the interval 7–274; it reads VRLVEVGPRD…HTGVDMHALV (268 aa). Arginine 15 contributes to the substrate binding site. 3 residues coordinate a divalent metal cation: aspartate 16, histidine 207, and histidine 209. Residue cysteine 240 is part of the active site. Asparagine 249 serves as a coordination point for a divalent metal cation.

The protein belongs to the HMG-CoA lyase family. In terms of assembly, homodimer. Mg(2+) is required as a cofactor. Mn(2+) serves as cofactor.

It catalyses the reaction 3-hydroxy-3-(4-methylpent-3-en-1-yl)glutaryl-CoA = 7-methyl-3-oxooct-6-enoyl-CoA + acetate. The catalysed reaction is (3S)-3-hydroxy-3-methylglutaryl-CoA = acetoacetate + acetyl-CoA. Its pathway is metabolic intermediate metabolism; (S)-3-hydroxy-3-methylglutaryl-CoA degradation; acetoacetate from (S)-3-hydroxy-3-methylglutaryl-CoA: step 1/1. Involved in the L-leucine, isovalerate and acyclic monoterpene catabolism. Catalyzes the cleavage of 3-hydroxy-3-methylglutaryl-CoA (HMG-CoA) to yield acetyl-CoA and acetoacetate. It can also catalyze the cleavage of 3-hydroxy-3-isohexenylglutaryl-CoA (HIHG_CoA) to yield 7-methyl-3-oxooct-6-enoyl-CoA and acetate. This chain is 3-hydroxy-3-isohexenylglutaryl-CoA/hydroxy-methylglutaryl-CoA lyase, found in Pseudomonas aeruginosa (strain ATCC 15692 / DSM 22644 / CIP 104116 / JCM 14847 / LMG 12228 / 1C / PRS 101 / PAO1).